A 394-amino-acid chain; its full sequence is ATP phosphoribosyltransferase regulatory subunit (394 aa).

The protein belongs to the class-II aminoacyl-tRNA synthetase family. HisZ subfamily. Heteromultimer composed of HisG and HisZ subunits.

The protein resides in the cytoplasm. It participates in amino-acid biosynthesis; L-histidine biosynthesis; L-histidine from 5-phospho-alpha-D-ribose 1-diphosphate: step 1/9. In terms of biological role, required for the first step of histidine biosynthesis. May allow the feedback regulation of ATP phosphoribosyltransferase activity by histidine. The chain is ATP phosphoribosyltransferase regulatory subunit from Pseudomonas paraeruginosa (strain DSM 24068 / PA7) (Pseudomonas aeruginosa (strain PA7)).